The following is a 435-amino-acid chain: Eukaryotic peptide chain release factor subunit 1-2 (435 aa).

The residue at position 2 (Ala-2) is an N-acetylalanine.

It belongs to the eukaryotic release factor 1 family. In terms of assembly, heterodimer of two subunits, one of which binds GTP. Interacts with OR.

The protein localises to the cytoplasm. Directs the termination of nascent peptide synthesis (translation) in response to the termination codons UAA, UAG and UGA. Modulates plant growth and development. The protein is Eukaryotic peptide chain release factor subunit 1-2 of Brassica oleracea var. botrytis (Cauliflower).